The primary structure comprises 413 residues: Serine/threonine-protein kinase ppk27 (413 aa).

The region spanning 102–403 (WSINTKITST…LKDFNKHGNF (302 aa)) is the Protein kinase domain. Residues 108 to 116 (ITSTEQREV) and K133 each bind ATP. Catalysis depends on D231, which acts as the Proton acceptor.

This sequence belongs to the protein kinase superfamily. Ser/Thr protein kinase family.

It localises to the cytoplasm. It carries out the reaction L-seryl-[protein] + ATP = O-phospho-L-seryl-[protein] + ADP + H(+). The catalysed reaction is L-threonyl-[protein] + ATP = O-phospho-L-threonyl-[protein] + ADP + H(+). This chain is Serine/threonine-protein kinase ppk27 (ppk27), found in Schizosaccharomyces pombe (strain 972 / ATCC 24843) (Fission yeast).